A 178-amino-acid chain; its full sequence is Phosphopantetheine adenylyltransferase (178 aa).

Residue Ser-8 coordinates substrate. Residues 8-9 (SF) and His-16 each bind ATP. Substrate is bound by residues Lys-40, Thr-72, and Arg-86. Residues 87-89 (GLR), Glu-97, and 122-128 (YSFLSSS) contribute to the ATP site.

The protein belongs to the bacterial CoaD family. In terms of assembly, homohexamer. Mg(2+) serves as cofactor.

Its subcellular location is the cytoplasm. It catalyses the reaction (R)-4'-phosphopantetheine + ATP + H(+) = 3'-dephospho-CoA + diphosphate. It functions in the pathway cofactor biosynthesis; coenzyme A biosynthesis; CoA from (R)-pantothenate: step 4/5. Its function is as follows. Reversibly transfers an adenylyl group from ATP to 4'-phosphopantetheine, yielding dephospho-CoA (dPCoA) and pyrophosphate. This Picosynechococcus sp. (strain ATCC 27264 / PCC 7002 / PR-6) (Agmenellum quadruplicatum) protein is Phosphopantetheine adenylyltransferase.